A 575-amino-acid polypeptide reads, in one-letter code: MDPFHACSILKQLKTMYDEGQLTDIVVEVDHGKTFSCHRNVLAAISPYFRSMFTSGLTESTQKEVRIIGVEAESMGLVLNYAYTSRVILTEANVQALFTTASIFQIPSIQDQCAKYMISHLDPQNSIGVFIFADHYGHQELGDRSKEYIRKKFLCVTKEQEFLQLTKDQLISILDSDDLNVDREEHVYESIIRWFEHEQNEREVHLPEIFAKCIRFPLMEDAFIEKIPPRFAQAIVKSCGEKGPSNTNGCTQRLGMTASEMIICFDAAHKHSGKKQTVPCLDIVTGRVFKLCKPPNDLREVGILVSPDNDIYIAGGYRPSSSEVSIDHKAENDFWMYDHSTNRWLSKPSLLRARIGCKLVYCCGKMYAIGGRVYEGDGRNSLKSVECYDSRENCWMTVCAMPVAMEFHNAVEHKEKIYVLQGEFFLFYEPQKDYWGFLTPMTVPRIQGLAAVYKDSIYYIAGTCGNHQRVFTVEAYDIELNKWTRKKDFPCDQSINPYLKLVLFQNKLHLFVRATQVTVEEHIFRTSRKNSLYQYDDIADQWMKVYETPDRLWDLGRHFECAVAKLYPQCLQKVL.

The 69-residue stretch at 23 to 91 (TDIVVEVDHG…AYTSRVILTE (69 aa)) folds into the BTB domain. One can recognise a BACK domain in the interval 126 to 228 (SIGVFIFADH…MEDAFIEKIP (103 aa)). 5 Kelch repeats span residues 310-364 (DIYI…YCCG), 365-415 (KMYA…EHKE), 417-455 (IYVL…VYKD), 457-506 (IYYI…LFQN), and 516-562 (QVTV…FECA).

It belongs to the KBTBD8 family. Component of the BCR(KBTBD8) E3 ubiquitin ligase complex, at least composed of CUL3, KBTBD8 and RBX1.

The protein localises to the cytoplasm. It localises to the cytoskeleton. The protein resides in the spindle. It is found in the golgi apparatus. Substrate-specific adapter of a BCR (BTB-CUL3-RBX1) E3 ubiquitin ligase complex that acts as a regulator of neural crest specification. The BCR(KBTBD8) complex acts by mediating monoubiquitination of NOLC1 and TCOF1: monoubiquitination promotes the formation of a NOLC1-TCOF1 complex that acts as a platform to connect RNA polymerase I with enzymes responsible for ribosomal processing and modification, leading to remodel the translational program of differentiating cells in favor of neural crest specification. This is Kelch repeat and BTB domain-containing protein 8 from Rattus norvegicus (Rat).